We begin with the raw amino-acid sequence, 145 residues long: Holo-[acyl-carrier-protein] synthase (145 aa).

2 residues coordinate Mg(2+): D9 and E63.

Belongs to the P-Pant transferase superfamily. AcpS family. Mg(2+) is required as a cofactor.

It localises to the cytoplasm. The catalysed reaction is apo-[ACP] + CoA = holo-[ACP] + adenosine 3',5'-bisphosphate + H(+). Functionally, transfers the 4'-phosphopantetheine moiety from coenzyme A to a Ser of acyl-carrier-protein. This Burkholderia vietnamiensis (strain G4 / LMG 22486) (Burkholderia cepacia (strain R1808)) protein is Holo-[acyl-carrier-protein] synthase.